We begin with the raw amino-acid sequence, 585 residues long: YTH domain-containing family protein 3 (585 aa).

Disordered regions lie at residues 1-51 (MSAT…SYPP), 244-277 (KPAKPQPKLKPKGNVGIGGSAVPPPPIKHNMNIG), and 304-350 (PQPL…QPQL). Ser2 carries the post-translational modification N-acetylserine. Over residues 15 to 24 (NKVSVQNGSI) the composition is skewed to polar residues. Ser23 bears the Phosphoserine mark. A compositionally biased stretch (basic residues) spans 244 to 254 (KPAKPQPKLKP). Residues 329–350 (QQQQGPQPQAQPHQVQSQQPQL) show a composition bias toward low complexity. The 135-residue stretch at 416 to 550 (GRVFIIKSYS…EKAKQVLKII (135 aa)) folds into the YTH domain. RNA-binding positions include 422 to 424 (KSY), Asp428, 438 to 439 (WC), Asn468, Trp492, and Trp497.

This sequence belongs to the YTHDF family. YTHDF3 subfamily. Interacts with CNOT1; promoting recruitment of the CCR4-NOT complex. Interacts with YTHDF1. Interacts with YTHDF2. Interacts with PAN3.

It is found in the cytoplasm. The protein resides in the cytosol. Its subcellular location is the P-body. The protein localises to the stress granule. Functionally, specifically recognizes and binds N6-methyladenosine (m6A)-containing RNAs, and regulates their stability. M6A is a modification present at internal sites of mRNAs and some non-coding RNAs and plays a role in mRNA stability and processing. Acts as a regulator of mRNA stability by promoting degradation of m6A-containing mRNAs via interaction with the CCR4-NOT complex or PAN3. The YTHDF paralogs (YTHDF1, YTHDF2 and YTHDF3) share m6A-containing mRNAs targets and act redundantly to mediate mRNA degradation and cellular differentiation. Acts as a negative regulator of type I interferon response by down-regulating interferon-stimulated genes (ISGs) expression: acts by binding to FOXO3 mRNAs. Binds to FOXO3 mRNAs independently of METTL3-mediated m6A modification. Can also act as a regulator of mRNA stability in cooperation with YTHDF2 by binding to m6A-containing mRNA and promoting their degradation. Recognizes and binds m6A-containing circular RNAs (circRNAs); circRNAs are generated through back-splicing of pre-mRNAs, a non-canonical splicing process promoted by dsRNA structures across circularizing exons. Promotes formation of phase-separated membraneless compartments, such as P-bodies or stress granules, by undergoing liquid-liquid phase separation upon binding to mRNAs containing multiple m6A-modified residues: polymethylated mRNAs act as a multivalent scaffold for the binding of YTHDF proteins, juxtaposing their disordered regions and thereby leading to phase separation. The resulting mRNA-YTHDF complexes then partition into different endogenous phase-separated membraneless compartments, such as P-bodies, stress granules or neuronal RNA granules. May also recognize and bind N1-methyladenosine (m1A)-containing mRNAs: inhibits trophoblast invasion by binding to m1A-methylated transcripts of IGF1R, promoting their degradation. This is YTH domain-containing family protein 3 from Mus musculus (Mouse).